Reading from the N-terminus, the 512-residue chain is Cytochrome P450 monooxygenase astD (512 aa).

Residues 19 to 39 traverse the membrane as a helical segment; the sequence is MGISILVMLSTFLALGTIFVY. N-linked (GlcNAc...) asparagine glycans are attached at residues Asn-191 and Asn-413. Residue Cys-449 coordinates heme.

The protein belongs to the cytochrome P450 family. Heme is required as a cofactor.

Its subcellular location is the membrane. The protein operates within secondary metabolite biosynthesis; terpenoid biosynthesis. In terms of biological role, cytochrome P450 monooxygenase; part of the gene cluster that mediates the biosynthesis of astellolides, drimane-type sesquiterpene esters that show antimicrobial, anti-inflammatory, and anti-tumor activities. The first step in astellolide biosynthesis is performed by the sesquiterpene cyclase astC that catalyzes the formation of drimanyl pyrophosphate from farnesyl pyrophosphate. Drimanyl pyrophosphate is then dephosphorylated by the sesquiterpene phosphatase astI to produce drimanyl monophosphate which is further dephosphorylated to drim-8-ene-11-ol by atsK. Drim-8-ene-11-ol is converted to confertifolin, probably by the cytochrome P450 monooxygenase astD and/or the dehydrogenase astE. The cytochrome P450 monooxygenases astB, astF and astJ then hydroxylate confertifolin at C6, C14, or C15 to form trihydroxy confertifolin. The nonribosomal peptide synthetase astA catalyzes ester bond formation between trihydroxy contifolin and benzoic acid (BA) or 4-hydroxy benzoic acid (4HBA), leading to the formation of dideacetyl astellolides A and B, respectively. Finally, the O-acetyltransferase astG converts dideacetyl astellolides A and B into deacetyl astellolides A and B. In Aspergillus oryzae (strain ATCC 42149 / RIB 40) (Yellow koji mold), this protein is Cytochrome P450 monooxygenase astD.